We begin with the raw amino-acid sequence, 378 residues long: tRNA-specific 2-thiouridylase MnmA (378 aa).

Residues 9 to 16 (GVSGGVDS) and methionine 35 each bind ATP. The segment at 94 to 96 (NPD) is interaction with target base in tRNA. The Nucleophile role is filled by cysteine 99. Cysteines 99 and 195 form a disulfide. Glycine 123 lines the ATP pocket. Residues 145-147 (KDQ) form an interaction with tRNA region. Residue cysteine 195 is the Cysteine persulfide intermediate of the active site. The interaction with tRNA stretch occupies residues 307–308 (RY).

Belongs to the MnmA/TRMU family.

The protein localises to the cytoplasm. The enzyme catalyses S-sulfanyl-L-cysteinyl-[protein] + uridine(34) in tRNA + AH2 + ATP = 2-thiouridine(34) in tRNA + L-cysteinyl-[protein] + A + AMP + diphosphate + H(+). Catalyzes the 2-thiolation of uridine at the wobble position (U34) of tRNA, leading to the formation of s(2)U34. In Xanthomonas oryzae pv. oryzae (strain MAFF 311018), this protein is tRNA-specific 2-thiouridylase MnmA.